The following is a 246-amino-acid chain: Serine protease 1 (246 aa).

The signal sequence occupies residues Met-1 to Pro-17. Positions Val-18–Lys-23 are cleaved as a propeptide — activation peptide. In terms of domain architecture, Peptidase S1 spans Ile-24–Ala-244. 6 cysteine pairs are disulfide-bonded: Cys-30–Cys-160, Cys-48–Cys-64, Cys-132–Cys-233, Cys-139–Cys-206, Cys-171–Cys-185, and Cys-196–Cys-220. His-63 (charge relay system) is an active-site residue. Positions 75, 77, 80, and 85 each coordinate Ca(2+). Asp-107 serves as the catalytic Charge relay system. Substrate is bound by residues Asp-194–Ser-195, Gln-197–Gly-198, and Ser-200. Catalysis depends on Ser-200, which acts as the Charge relay system.

Belongs to the peptidase S1 family. Interacts with SERPINA1. The cofactor is Ca(2+). Autocatalytic cleavage after Lys-23 leads to beta-trypsin by releasing a terminal hexapeptide. Subsequent cleavage after Lys-148 leads to alpha-trypsin. Further cleavage after Lys-193 yields pseudotrypsin. A cleavage may also occur after Arg-122. In terms of processing, not sulfated on tyrosine residue(s). In terms of tissue distribution, synthesized in the acinar cells of the pancreas.

The protein resides in the secreted. The protein localises to the extracellular space. It carries out the reaction Preferential cleavage: Arg-|-Xaa, Lys-|-Xaa.. Its activity is regulated as follows. Is inhibited by scorpion cyclotide trypsin inhibitor TopI1. The sequence is that of Serine protease 1 (PRSS1) from Bos taurus (Bovine).